Reading from the N-terminus, the 568-residue chain is COMPASS component cclA (568 aa).

The disordered stretch occupies residues 1-113 (MASDSGTPPP…MRYKLAPPKP (113 aa)). Composition is skewed to basic and acidic residues over residues 68–77 (KESLKKRESK) and 89–98 (PDPKHREPKQ). The B30.2/SPRY domain occupies 160–353 (ADPGFPSSLY…IPIRFKQHIY (194 aa)).

This sequence belongs to the cclA family. In terms of assembly, component of the COMPASS complex.

The protein resides in the nucleus. It is found in the chromosome. Its subcellular location is the telomere. Its function is as follows. Component of the COMPASS (Set1C) complex that specifically mono-, di- and trimethylates histone H3 to form H3K4me1/2/3, which subsequently plays a role in telomere length maintenance and transcription elongation regulation. Controls the production of several secondary metabolites, including colletochlorins, higginsianins and sclerosporide. Plays a key role in mycelial growth, sporulation, spore germination and virulence. In Colletotrichum higginsianum (strain IMI 349063) (Crucifer anthracnose fungus), this protein is COMPASS component cclA.